We begin with the raw amino-acid sequence, 147 residues long: Ribosome-binding factor A (147 aa).

Residues 122-147 (QQQFGSVDDDVIENDIEESDDTEGKV) are disordered. Positions 128–147 (VDDDVIENDIEESDDTEGKV) are enriched in acidic residues.

The protein belongs to the RbfA family. In terms of assembly, monomer. Binds 30S ribosomal subunits, but not 50S ribosomal subunits or 70S ribosomes.

It localises to the cytoplasm. Functionally, one of several proteins that assist in the late maturation steps of the functional core of the 30S ribosomal subunit. Associates with free 30S ribosomal subunits (but not with 30S subunits that are part of 70S ribosomes or polysomes). Required for efficient processing of 16S rRNA. May interact with the 5'-terminal helix region of 16S rRNA. The polypeptide is Ribosome-binding factor A (Shewanella oneidensis (strain ATCC 700550 / JCM 31522 / CIP 106686 / LMG 19005 / NCIMB 14063 / MR-1)).